Consider the following 238-residue polypeptide: Carboxymethylenebutenolidase (238 aa).

Catalysis depends on residues Cys123, Asp171, and His201.

The protein belongs to the dienelactone hydrolase family. Monomer.

The catalysed reaction is 2-(5-oxo-2,5-dihydrofuran-2-ylidene)acetate + H2O = 4-oxohex-2-enedioate + H(+). Its pathway is aromatic compound metabolism; 3-chlorocatechol degradation. Functionally, ring cleavage of cyclic ester dienelactone to produce maleylacetate. The sequence is that of Carboxymethylenebutenolidase (tcbE) from Pseudomonas sp. (strain P51).